A 261-amino-acid polypeptide reads, in one-letter code: Indole-3-glycerol phosphate synthase (261 aa).

Belongs to the TrpC family.

It catalyses the reaction 1-(2-carboxyphenylamino)-1-deoxy-D-ribulose 5-phosphate + H(+) = (1S,2R)-1-C-(indol-3-yl)glycerol 3-phosphate + CO2 + H2O. It functions in the pathway amino-acid biosynthesis; L-tryptophan biosynthesis; L-tryptophan from chorismate: step 4/5. The protein is Indole-3-glycerol phosphate synthase of Burkholderia lata (strain ATCC 17760 / DSM 23089 / LMG 22485 / NCIMB 9086 / R18194 / 383).